The primary structure comprises 623 residues: Heterogeneous nuclear ribonucleoprotein Q (623 aa).

N-acetylalanine is present on Ala-2. Ser-159 bears the Phosphoserine mark. 3 consecutive RRM domains span residues 162–241, 243–325, and 338–408; these read TEIF…ISVA, NRLF…WADP, and KVLF…FAKP. A Glycyl lysine isopeptide (Lys-Gly) (interchain with G-Cter in SUMO2) cross-link involves residue Lys-168. Lys-221 bears the N6-acetyllysine mark. The residue at position 363 (Lys-363) is an N6-acetyllysine. Tyr-373 is subject to Phosphotyrosine. Residues 400–561 are interaction with APOBEC1; it reads NIEIVFAKPP…GARGGRGGNV (162 aa). Arg-444 bears the Asymmetric dimethylarginine; by PRMT1; alternate mark. Arg-444 bears the Omega-N-methylarginine; by PRMT1; alternate mark. 6 consecutive repeat copies span residues 448-450, 451-453, 460-464, 469-472, 478-480, and 485-488. Positions 448–559 are 8 X 3 AA repeats of R-G-G; it reads RGGRGGYGYP…VRGARGGRGG (112 aa). Residues 460–488 form a 3 X 4 AA repeats of Y-Y-G-Y region; the sequence is YYGYEDYYDYYGYDYHNYRGGYEDPYYGY. At Arg-496 the chain carries Omega-N-methylarginine; by PRMT1. Residues 497 to 623 form a disordered region; sequence GRGGRGARGA…YQDTFGQQWK (127 aa). One copy of the 1-4 repeat lies at 498-500; the sequence is RGG. Low complexity predominate over residues 504–522; sequence RGAAPSRGRGAAPPRGRAG. Position 510 is an asymmetric dimethylarginine; by PRMT1 (Arg-510). 4 positions are modified to asymmetric dimethylarginine; by PRMT1; alternate: Arg-518, Arg-526, Arg-536, and Arg-539. Omega-N-methylarginine; by PRMT1; alternate is present on residues Arg-518, Arg-526, Arg-536, and Arg-539. An interaction with SMN region spans residues 518-549; it reads RGRAGYSQRGGPGSARGVRGARGGAQQQRGRG. The 1-5 repeat unit spans residues 526 to 528; that stretch reads RGG. 3 repeat units span residues 539 to 541, 554 to 556, and 557 to 559. Positions 550–562 are enriched in gly residues; it reads VRGARGGRGGNVG. A Bipartite nuclear localization signal motif is present at residues 564 to 578; sequence KRKADGYNQPDSKRR. A compositionally biased stretch (polar residues) spans 580–595; the sequence is TNNQNWGSQPIAQQPL. Phosphoserine is present on Ser-587. A Glycyl lysine isopeptide (Lys-Gly) (interchain with G-Cter in SUMO2) cross-link involves residue Lys-607. Over residues 611-623 the composition is skewed to polar residues; that stretch reads QEFYQDTFGQQWK.

In terms of assembly, isoform 1 is a component of the APOB mRNA editosome complex and interacts with APOBEC1 and A1CF (APOBEC1 complementation factor). Part of a complex associated with the FOS mCRD domain and consisting of PABPC1, PAIP1, CSDE1/UNR, HNRPD and SYNCRIP. Isoform 3 interacts with HNRPR. Interacts with POLR2A hyperphosphorylated C-terminal domain. Isoform 1, isoform 2 and isoform 3 interact with SMN. Isoform 3 interacts through its C-terminal domain with SYT7, SYT8 and SYT9. The non-phosphorylated and phosphorylated forms are colocalized with PAIP1 in polysomes. Interacts with HABP4. Identified in a histone pre-mRNA complex, at least composed of ERI1, LSM11, SLBP, SNRPB, SYNCRIP and YBX1. Identified in the spliceosome C complex. Component of the coding region determinant (CRD)-mediated complex, composed of DHX9, HNRNPU, IGF2BP1, SYNCRIP and YBX1. Identified in a mRNP complex, at least composed of DHX9, DDX3X, ELAVL1, HNRNPU, IGF2BP1, ILF3, PABPC1, PCBP2, PTBP2, STAU1, STAU2, SYNCRIP and YBX1. Identified in a mRNP granule complex, at least composed of ACTB, ACTN4, DHX9, ERG, HNRNPA1, HNRNPA2B1, HNRNPAB, HNRNPD, HNRNPL, HNRNPR, HNRNPU, HSPA1, HSPA8, IGF2BP1, ILF2, ILF3, NCBP1, NCL, PABPC1, PABPC4, PABPN1, RPLP0, RPS3, RPS3A, RPS4X, RPS8, RPS9, SYNCRIP, YBX1 and untranslated mRNAs. Interacts with GTPBP1. Component of the GAIT complex; in humans the complex assembly seems to be a two-step process in which EPRS1 first associates with SYNCRIP to form a pre-GAIT complex which is deficient in GAIT element binding. As to quaternary structure, (Microbial infection) Interacts with minute virus of mice (MVM) NS1 protein. (Microbial infection) Interacts with herpes virus 8/HHV-8 protein vIRF-1; this interaction induces ubiquitination and degradation of SYNCRIP. Phosphorylated on tyrosine. The membrane-bound form found in microsomes is phosphorylated in vitro by insulin receptor tyrosine kinase (INSR). Phosphorylation is inhibited upon binding to RNA, whereas the cytoplasmic form is poorly phosphorylated. As to expression, ubiquitously expressed. Detected in heart, brain, pancreas, placenta, spleen, lung, liver, skeletal muscle, kidney, thymus, prostate, uterus, small intestine, colon, peripheral blood and testis.

It localises to the cytoplasm. The protein localises to the microsome. The protein resides in the endoplasmic reticulum. Its subcellular location is the nucleus. It is found in the nucleoplasm. Its function is as follows. Heterogenous nuclear ribonucleoprotein (hnRNP) implicated in mRNA processing mechanisms. Component of the CRD-mediated complex that promotes MYC mRNA stability. Isoform 1, isoform 2 and isoform 3 are associated in vitro with pre-mRNA, splicing intermediates and mature mRNA protein complexes. Isoform 1 binds to apoB mRNA AU-rich sequences. Isoform 1 is part of the APOB mRNA editosome complex and may modulate the postranscriptional C to U RNA-editing of the APOB mRNA through either by binding to A1CF (APOBEC1 complementation factor), to APOBEC1 or to RNA itself. May be involved in translationally coupled mRNA turnover. Implicated with other RNA-binding proteins in the cytoplasmic deadenylation/translational and decay interplay of the FOS mRNA mediated by the major coding-region determinant of instability (mCRD) domain. Interacts in vitro preferentially with poly(A) and poly(U) RNA sequences. Isoform 3 may be involved in cytoplasmic vesicle-based mRNA transport through interaction with synaptotagmins. Component of the GAIT (gamma interferon-activated inhibitor of translation) complex which mediates interferon-gamma-induced transcript-selective translation inhibition in inflammation processes. Upon interferon-gamma activation assembles into the GAIT complex which binds to stem loop-containing GAIT elements in the 3'-UTR of diverse inflammatory mRNAs (such as ceruplasmin) and suppresses their translation; seems not to be essential for GAIT complex function. In Homo sapiens (Human), this protein is Heterogeneous nuclear ribonucleoprotein Q (SYNCRIP).